The sequence spans 322 residues: Ferredoxin--NADP reductase (322 aa).

Positions 34, 42, 47, 87, 120, 279, and 320 each coordinate FAD.

It belongs to the ferredoxin--NADP reductase type 2 family. In terms of assembly, homodimer. The cofactor is FAD.

It catalyses the reaction 2 reduced [2Fe-2S]-[ferredoxin] + NADP(+) + H(+) = 2 oxidized [2Fe-2S]-[ferredoxin] + NADPH. The chain is Ferredoxin--NADP reductase from Streptococcus gordonii (strain Challis / ATCC 35105 / BCRC 15272 / CH1 / DL1 / V288).